The sequence spans 378 residues: Quinolinate synthase (378 aa).

2 residues coordinate iminosuccinate: H59 and S80. C125 contributes to the [4Fe-4S] cluster binding site. Residues 151–153 (YAN) and S168 contribute to the iminosuccinate site. C212 is a [4Fe-4S] cluster binding site. Iminosuccinate is bound by residues 238–240 (HPE) and T255. [4Fe-4S] cluster is bound at residue C309.

Belongs to the quinolinate synthase family. Type 1 subfamily. It depends on [4Fe-4S] cluster as a cofactor.

The protein localises to the cytoplasm. It catalyses the reaction iminosuccinate + dihydroxyacetone phosphate = quinolinate + phosphate + 2 H2O + H(+). It functions in the pathway cofactor biosynthesis; NAD(+) biosynthesis; quinolinate from iminoaspartate: step 1/1. Its function is as follows. Catalyzes the condensation of iminoaspartate with dihydroxyacetone phosphate to form quinolinate. In Burkholderia orbicola (strain MC0-3), this protein is Quinolinate synthase.